Consider the following 468-residue polypeptide: Cysteine--tRNA ligase (468 aa).

C29 is a Zn(2+) binding site. Positions 31-41 (PTVYNYIHIGN) match the 'HIGH' region motif. Zn(2+)-binding residues include C209, H234, and E238. The short motif at 266-270 (KMSKS) is the 'KMSKS' region element. K269 serves as a coordination point for ATP.

Belongs to the class-I aminoacyl-tRNA synthetase family. In terms of assembly, monomer. Requires Zn(2+) as cofactor.

The protein resides in the cytoplasm. It carries out the reaction tRNA(Cys) + L-cysteine + ATP = L-cysteinyl-tRNA(Cys) + AMP + diphosphate. The chain is Cysteine--tRNA ligase from Brevibacillus brevis (strain 47 / JCM 6285 / NBRC 100599).